The sequence spans 459 residues: tRNA modification GTPase MnmE (459 aa).

The (6S)-5-formyl-5,6,7,8-tetrahydrofolate site is built by Arg25, Glu87, and Arg126. Residues 221–380 form the TrmE-type G domain; it reads GLKVAIVGRP…LETAILEIVQ (160 aa). Asn231 is a K(+) binding site. GTP is bound by residues 231-236, 250-256, and 275-278; these read NVGKSS, TDLPGTT, and DTAG. Ser235 lines the Mg(2+) pocket. Positions 250, 252, and 255 each coordinate K(+). Thr256 is a binding site for Mg(2+). Residue Lys459 coordinates (6S)-5-formyl-5,6,7,8-tetrahydrofolate.

Belongs to the TRAFAC class TrmE-Era-EngA-EngB-Septin-like GTPase superfamily. TrmE GTPase family. In terms of assembly, homodimer. Heterotetramer of two MnmE and two MnmG subunits. K(+) serves as cofactor.

The protein localises to the cytoplasm. Its function is as follows. Exhibits a very high intrinsic GTPase hydrolysis rate. Involved in the addition of a carboxymethylaminomethyl (cmnm) group at the wobble position (U34) of certain tRNAs, forming tRNA-cmnm(5)s(2)U34. The protein is tRNA modification GTPase MnmE of Nostoc sp. (strain PCC 7120 / SAG 25.82 / UTEX 2576).